Here is a 180-residue protein sequence, read N- to C-terminus: ATP-dependent protease subunit HslV (180 aa).

Residue threonine 2 is part of the active site. Na(+) is bound by residues glycine 157, cysteine 160, and threonine 163.

This sequence belongs to the peptidase T1B family. HslV subfamily. A double ring-shaped homohexamer of HslV is capped on each side by a ring-shaped HslU homohexamer. The assembly of the HslU/HslV complex is dependent on binding of ATP.

The protein resides in the cytoplasm. The catalysed reaction is ATP-dependent cleavage of peptide bonds with broad specificity.. Allosterically activated by HslU binding. Protease subunit of a proteasome-like degradation complex believed to be a general protein degrading machinery. The chain is ATP-dependent protease subunit HslV from Tolumonas auensis (strain DSM 9187 / NBRC 110442 / TA 4).